The sequence spans 701 residues: DNA ligase A (701 aa).

The disordered stretch occupies residues 1–23 (MSEKATGEVEAELPEHPDADERR). NAD(+) is bound by residues 49 to 53 (DAEFD), 99 to 100 (SL), and Glu129. Lys131 (N6-AMP-lysine intermediate) is an active-site residue. Residues Arg152, Glu192, Lys308, and Lys332 each contribute to the NAD(+) site. Zn(2+) contacts are provided by Cys426, Cys429, Cys445, and Cys451. A BRCT domain is found at 615–701 (SIERTLEGLS…EQGPPVEPAE (87 aa)).

Belongs to the NAD-dependent DNA ligase family. LigA subfamily. The cofactor is Mg(2+). Mn(2+) serves as cofactor.

The enzyme catalyses NAD(+) + (deoxyribonucleotide)n-3'-hydroxyl + 5'-phospho-(deoxyribonucleotide)m = (deoxyribonucleotide)n+m + AMP + beta-nicotinamide D-nucleotide.. Functionally, DNA ligase that catalyzes the formation of phosphodiester linkages between 5'-phosphoryl and 3'-hydroxyl groups in double-stranded DNA using NAD as a coenzyme and as the energy source for the reaction. It is essential for DNA replication and repair of damaged DNA. Probably the only ligase required for non-homologous end joining (NHEJ) repair of 3-overhangs. The chain is DNA ligase A from Mycolicibacterium smegmatis (strain ATCC 700084 / mc(2)155) (Mycobacterium smegmatis).